A 125-amino-acid polypeptide reads, in one-letter code: QQANDVRATYHYYRPAQNNWDLGAPAVSAYCATWDASKPLSWRSKYGWTAFCGPAGPRGQAACGKCLRVTNPATGAQITARIVDQCANGGLDLDWDTVFTKIDTNGIGYQQGHLNVNYQFVDCRD.

At glutamine 1 the chain carries Pyrrolidone carboxylic acid. The Barwin domain maps to 1–125; sequence QQANDVRATY…VNYQFVDCRD (125 aa). 3 disulfides stabilise this stretch: cysteine 31-cysteine 63, cysteine 52-cysteine 86, and cysteine 66-cysteine 123.

May be involved in a defense mechanism. Probable plant lectin. Binds weakly a chitin analog. The chain is Barwin from Hordeum vulgare (Barley).